The following is a 229-amino-acid chain: PKHD-type hydroxylase Nham_1514 (229 aa).

Residues 78 to 180 (QIFPPLFNRY…RVASFFWLQS (103 aa)) form the Fe2OG dioxygenase domain. Fe cation contacts are provided by His-98, Asp-100, and His-161. Arg-171 serves as a coordination point for 2-oxoglutarate.

The cofactor is Fe(2+). It depends on L-ascorbate as a cofactor.

This chain is PKHD-type hydroxylase Nham_1514, found in Nitrobacter hamburgensis (strain DSM 10229 / NCIMB 13809 / X14).